Consider the following 618-residue polypeptide: MKQSKMLIPTLREMPSDAQVISHALMMRAGYVRQVSAGIYAYLPLANRTIEKLKTIMRQEFDKIGAVEMLAPALLTADLWRESGRYETYGDDLYKLKNRESSDFILGPTHEETFTTLVRDAVKSYKQLPLNLYQIQAKYRDEKRPRNGLLRTREFIMKDGYSFHQNYEDLDVTYEDYRKAYEAIFTRSGLEFKGIIGDGGAMGGKDSQEFMAITPERTDLNRWLVLDKSIPSLSDIPEDVLEEIKKELASWLISGEDTIAYSSESSYAANLEMASNAFSPTTKVAVAEDLKEVATPDCKTIDQVADFLNISAETTIKTLLFIADEKPVVALLVGNDQVNDVKLKNYLGADFLDPATEEEAFQVFGAHFGSLGPVNLPDSVRIIADRNVQNLANAVSGANKDGFHLTGVNPERDFKAEFVDIREVKEGEASPDGHGHLQFARGIEVGHIFKLGTRYSDSLGANILDENGKSIPIVMGCYGIGVSRILSAVIEQHARLFVSKTPKGEYRYSWGINFPKELAPFDIHLITVNTKDEEAQTLTDKLEKELMTKGYEVLTDDRNERVGSKFSDSDLIGLPIRITVGKKASEGIVEIKIKASGDSIEVNAENVIETLEILTKDH.

Belongs to the class-II aminoacyl-tRNA synthetase family. ProS type 1 subfamily. As to quaternary structure, homodimer.

It localises to the cytoplasm. It carries out the reaction tRNA(Pro) + L-proline + ATP = L-prolyl-tRNA(Pro) + AMP + diphosphate. In terms of biological role, catalyzes the attachment of proline to tRNA(Pro) in a two-step reaction: proline is first activated by ATP to form Pro-AMP and then transferred to the acceptor end of tRNA(Pro). As ProRS can inadvertently accommodate and process non-cognate amino acids such as alanine and cysteine, to avoid such errors it has two additional distinct editing activities against alanine. One activity is designated as 'pretransfer' editing and involves the tRNA(Pro)-independent hydrolysis of activated Ala-AMP. The other activity is designated 'posttransfer' editing and involves deacylation of mischarged Ala-tRNA(Pro). The misacylated Cys-tRNA(Pro) is not edited by ProRS. This is Proline--tRNA ligase from Streptococcus uberis (strain ATCC BAA-854 / 0140J).